A 349-amino-acid chain; its full sequence is Putative inosamine-phosphate amidinotransferase 2 (349 aa).

The protein belongs to the amidinotransferase family.

The catalysed reaction is 1-amino-1-deoxy-scyllo-inositol 4-phosphate + L-arginine = 1-guanidino-1-deoxy-scyllo-inositol 4-phosphate + L-ornithine. It participates in antibiotic biosynthesis; streptomycin biosynthesis. It is not obvious if strB2 participates in streptomycin biosynthesis as an inosamine-phosphate amidinotransferase. Attempt to measure its activity have failed and the nucleophilic cysteine which is the key residue for amidine transfer is not conserved but replaced by a glycine residue. This Streptomyces griseus protein is Putative inosamine-phosphate amidinotransferase 2 (strB2).